A 315-amino-acid polypeptide reads, in one-letter code: Transaldolase (315 aa).

The active-site Schiff-base intermediate with substrate is the lysine 131.

This sequence belongs to the transaldolase family. Type 1 subfamily. As to quaternary structure, homodimer.

Its subcellular location is the cytoplasm. The catalysed reaction is D-sedoheptulose 7-phosphate + D-glyceraldehyde 3-phosphate = D-erythrose 4-phosphate + beta-D-fructose 6-phosphate. It participates in carbohydrate degradation; pentose phosphate pathway; D-glyceraldehyde 3-phosphate and beta-D-fructose 6-phosphate from D-ribose 5-phosphate and D-xylulose 5-phosphate (non-oxidative stage): step 2/3. Transaldolase is important for the balance of metabolites in the pentose-phosphate pathway. This is Transaldolase from Actinobacillus pleuropneumoniae serotype 7 (strain AP76).